Reading from the N-terminus, the 635-residue chain is Biosynthetic arginine decarboxylase (635 aa).

At Lys100 the chain carries N6-(pyridoxal phosphate)lysine. A substrate-binding site is contributed by 282-292 (VDIGGGLGVDY).

Belongs to the Orn/Lys/Arg decarboxylase class-II family. SpeA subfamily. It depends on Mg(2+) as a cofactor. Pyridoxal 5'-phosphate is required as a cofactor.

The enzyme catalyses L-arginine + H(+) = agmatine + CO2. It functions in the pathway amine and polyamine biosynthesis; agmatine biosynthesis; agmatine from L-arginine: step 1/1. In terms of biological role, catalyzes the biosynthesis of agmatine from arginine. The chain is Biosynthetic arginine decarboxylase from Geobacter metallireducens (strain ATCC 53774 / DSM 7210 / GS-15).